We begin with the raw amino-acid sequence, 257 residues long: Low affinity immunoglobulin gamma Fc region receptor III-A (257 aa).

The first 19 residues, 1–19, serve as a signal peptide directing secretion; it reads MWQLLSPTALLLLVSVPGT. At 20-209 the chain is on the extracellular side; the sequence is HAEDPPKSVV…ILSFFLPWHQ (190 aa). 2 Ig-like C2-type domains span residues 25-104 and 108-190; these read PKSV…LRLE and GWLL…VKVT. Intrachain disulfides connect Cys48/Cys90 and Cys129/Cys173. N-linked (GlcNAc...) asparagine glycosylation is found at Asn64, Asn134, and Asn162. The N-linked (GlcNAc...) asparagine; in variant N-181 glycan is linked to Asp181. A helical transmembrane segment spans residues 210-230; that stretch reads IIFCLVMGFLFAVDTGLYFSV. Residues 231–257 are Cytoplasmic-facing; it reads RKVLRSSKEDWRNGKVTWSRDPADKGG.

In terms of assembly, forms a heterooligomeric complex with ITAM-containing signaling subunits FCER1G. Interacts (via transmembrane domain) with signaling subunits; this interaction is a prerequisite for receptor complex expression on the cell surface and intracellular signal transduction. Binds the Fc region of antigen-complexed IgG. In terms of tissue distribution, expressed in polymorphonuclear leukocytes, pulmonary alveolar macrophages and peripheral blood mononuclear cells (at protein level). Found in spleen, and at very low levels in lymph nodes but not in thymus or liver.

It localises to the cell membrane. Functionally, receptor for the invariable Fc fragment of immunoglobulin gamma (IgG). Optimally activated upon binding of clustered antigen-IgG complexes displayed on cell surfaces, triggers lysis of antibody-coated cells, a process known as antibody-dependent cellular cytotoxicity (ADCC). Does not bind free monomeric IgG, thus avoiding inappropriate effector cell activation in the absence of antigenic trigger. Mediates IgG effector functions on natural killer (NK) cells. Binds antigen-IgG complexes generated upon infection and triggers NK cell-dependent cytokine production and degranulation to limit viral load and propagation. Fc-binding subunit that associates with FCER1G adapter to form functional signaling complexes. Following the engagement of antigen-IgG complexes, triggers phosphorylation of immunoreceptor tyrosine-based activation motif (ITAM)-containing adapter with subsequent activation of phosphatidylinositol 3-kinase signaling and sustained elevation of intracellular calcium that ultimately drive NK cell activation. Mediates enhanced ADCC in response to afucosylated IgGs. This is Low affinity immunoglobulin gamma Fc region receptor III-A from Sus scrofa (Pig).